The chain runs to 210 residues: Orotate phosphoribosyltransferase (210 aa).

5-phospho-alpha-D-ribose 1-diphosphate contacts are provided by residues Arg94, Lys98, His100, and Glu120–Ser128. Orotate is bound at residue Ser124.

It belongs to the purine/pyrimidine phosphoribosyltransferase family. PyrE subfamily. Homodimer. It depends on Mg(2+) as a cofactor.

The catalysed reaction is orotidine 5'-phosphate + diphosphate = orotate + 5-phospho-alpha-D-ribose 1-diphosphate. The protein operates within pyrimidine metabolism; UMP biosynthesis via de novo pathway; UMP from orotate: step 1/2. Its function is as follows. Catalyzes the transfer of a ribosyl phosphate group from 5-phosphoribose 1-diphosphate to orotate, leading to the formation of orotidine monophosphate (OMP). The sequence is that of Orotate phosphoribosyltransferase from Bacillus anthracis (strain A0248).